The sequence spans 473 residues: MLEQVQKFLLSRAACEGSDSHTRYAELFHKLDVNKDGKVDILELQEGLKAMGMAVGKGAEEKIVEAGDTNKDGHLDFGEFMRYLEEHEKKMKIAFTSLDKNKDGKIESSEVMNSLKTLGINISLDHAEKILKSMDSDGTLTVDWNEWRDHFLFNPADNIQQIIRFWKHSTVLDIGDSLTIPDEFTEEEKKTGQWWKHLLAGGMAGAVSRTGTAPLDRLKVMMQVHGTKGNSNIITGLKQMVKEGGVRSLWRGNGVNVIKIAPETAMKFWAYEQYKKLFTSESGKLGTAERFIAGSLAGATAQTSIYPMEVLKTRLAVGKTGQYSGMFDCAKKIMQKEGILAFYKGYIPNILGIIPYAGIDLAIYETLKNYWLQNYAKDSANPGVLVLLGCGTVSSTCGQLASYPLALIRTRMQAQASIEGAPQLNMGGLFRKIVAKEGFFGLYTGIAPNFLKVLPAVSISYVVYEKMKIQLGI.

The interval 1 to 173 is regulatory N-terminal domain; the sequence is MLEQVQKFLL…RFWKHSTVLD (173 aa). At 1 to 197 the chain is on the mitochondrial intermembrane side; the sequence is MLEQVQKFLL…EKKTGQWWKH (197 aa). 4 consecutive EF-hand domains span residues 19–54, 55–88, 86–121, and 122–157; these read DSHTRYAELFHKLDVNKDGKVDILELQEGLKAMGMA, VGKGAEEKIVEAGDTNKDGHLDFGEFMRYLEEHE, EHEKKMKIAFTSLDKNKDGKIESSEVMNSLKTLGIN, and ISLDHAEKILKSMDSDGTLTVDWNEWRDHFLFNPAD. Residues Asp-32, Asn-34, Asp-36, Lys-38, Glu-43, Asp-68, Asn-70, Asp-72, His-74, Glu-79, Asp-99, Asn-101, Asp-103, Lys-105, Glu-110, Asp-135, Asp-137, Thr-139, Thr-141, and Glu-146 each contribute to the Ca(2+) site. Positions 159-168 are linker region; that stretch reads IQQIIRFWKH. Residues 174–473 are C-terminal transmembrane transporter domain; the sequence is IGDSLTIPDE…YEKMKIQLGI (300 aa). 3 Solcar repeats span residues 192 to 277, 285 to 370, and 382 to 470; these read GQWW…YKKL, LGTA…LKNY, and PGVL…MKIQ. The chain crosses the membrane as a helical span at residues 198–215; that stretch reads LLAGGMAGAVSRTGTAPL. Topologically, residues 216–251 are mitochondrial matrix; that stretch reads DRLKVMMQVHGTKGNSNIITGLKQMVKEGGVRSLWR. The chain crosses the membrane as a helical span at residues 252–271; that stretch reads GNGVNVIKIAPETAMKFWAY. At 272 to 294 the chain is on the mitochondrial intermembrane side; the sequence is EQYKKLFTSESGKLGTAERFIAG. A helical membrane pass occupies residues 295–308; it reads SLAGATAQTSIYPM. Residues 309 to 344 are Mitochondrial matrix-facing; it reads EVLKTRLAVGKTGQYSGMFDCAKKIMQKEGILAFYK. A helical transmembrane segment spans residues 345–364; it reads GYIPNILGIIPYAGIDLAIY. Residues 365 to 387 are Mitochondrial intermembrane-facing; it reads ETLKNYWLQNYAKDSANPGVLVL. The chain crosses the membrane as a helical span at residues 388-405; that stretch reads LGCGTVSSTCGQLASYPL. Over 406-444 the chain is Mitochondrial matrix; it reads ALIRTRMQAQASIEGAPQLNMGGLFRKIVAKEGFFGLYT. Residues 445–464 traverse the membrane as a helical segment; that stretch reads GIAPNFLKVLPAVSISYVVY. Over 465-473 the chain is Mitochondrial intermembrane; it reads EKMKIQLGI.

The protein belongs to the mitochondrial carrier (TC 2.A.29) family. As to quaternary structure, monomer.

Its subcellular location is the mitochondrion inner membrane. The enzyme catalyses Mg(2+)(out) + phosphate(in) + ATP(out) = Mg(2+)(in) + phosphate(out) + ATP(in). It carries out the reaction ADP(out) + phosphate(in) + H(+)(out) = ADP(in) + phosphate(out) + H(+)(in). The catalysed reaction is AMP(out) + phosphate(in) = AMP(in) + phosphate(out). It catalyses the reaction phosphate(in) + ATP(out) + 2 H(+)(out) = phosphate(out) + ATP(in) + 2 H(+)(in). The enzyme catalyses dADP(in) + ADP(out) = dADP(out) + ADP(in). It carries out the reaction Mg(2+)(in) + ADP(out) + ATP(in) + H(+)(out) = Mg(2+)(out) + ADP(in) + ATP(out) + H(+)(in). The catalysed reaction is ADP(out) + diphosphate(in) = ADP(in) + diphosphate(out). It catalyses the reaction dAMP(in) + ADP(out) + H(+)(out) = dAMP(out) + ADP(in) + H(+)(in). The enzyme catalyses 3'-AMP(in) + ADP(out) + H(+)(out) = 3'-AMP(out) + ADP(in) + H(+)(in). It carries out the reaction dAMP(out) + phosphate(in) = dAMP(in) + phosphate(out). The catalysed reaction is 3'-AMP(out) + phosphate(in) = 3'-AMP(in) + phosphate(out). It catalyses the reaction dADP(out) + phosphate(in) + H(+)(out) = dADP(in) + phosphate(out) + H(+)(in). With respect to regulation, activated by an increase in cytosolic calcium levels that induce a conformational change of the N-terminal regulatory domain, uncapping the channel and allowing transport. Inhibited by bathophenanthroline, mersalyl, p-hydroxymercuribenzoate, bromcresol purple and tannic acid. Functionally, electroneutral antiporter that mediates the transport of adenyl nucleotides through the inner mitochondrial membrane. Originally identified as an ATP-magnesium/inorganic phosphate antiporter, it also acts as a broad specificity adenyl nucleotide antiporter. By regulating the mitochondrial matrix adenyl nucleotide pool could adapt to changing cellular energetic demands and indirectly regulate adenyl nucleotide-dependent metabolic pathways. The chain is Mitochondrial adenyl nucleotide antiporter SLC25A24-A (slc25a24-a) from Xenopus laevis (African clawed frog).